An 823-amino-acid chain; its full sequence is Polyadenylation and cleavage factor homolog 11 (823 aa).

In terms of domain architecture, CID spans 3 to 135 (SVESAARDYR…ELDMKINKLD (133 aa)). 5 disordered regions span residues 142-176 (NPQTGRALRDDPQVMAPSQSRPAGNATSPAASTST), 188-301 (SSTP…KTLK), 340-395 (SSAP…LPAP), 570-643 (LPAP…EKRS), and 728-755 (WLTPRASDETNEQEADKPEEPLPGVASS). Composition is skewed to polar residues over residues 157–176 (APSQSRPAGNATSPAASTST) and 188–198 (SSTPGAASASK). Over residues 200–226 (VVEKTKSPGTVNKEKQVKKEPKQDPLD) the composition is skewed to basic and acidic residues. Low complexity-rich tracts occupy residues 227 to 242 (KLLPSSSASKTSSSPA) and 342 to 353 (APPFQHPQQHHP). The span at 374–390 (PQDPAPIVPVQAPPPQQ) shows a compositional bias: pro residues. A compositionally biased stretch (low complexity) spans 571-581 (PAPARSPSSPR). Residues 609 to 624 (QPQQNARWGGANKQQN) show a composition bias toward polar residues.

In Caenorhabditis elegans, this protein is Polyadenylation and cleavage factor homolog 11 (pcf-11).